The sequence spans 350 residues: 3-dehydroquinate synthase (350 aa).

Residues Gly106–Asp110, Thr130–Ser131, Lys143, and Lys152 each bind NAD(+). The Zn(2+) site is built by Glu185, His246, and His263.

It belongs to the sugar phosphate cyclases superfamily. Dehydroquinate synthase family. The cofactor is NAD(+). Co(2+) serves as cofactor. Requires Zn(2+) as cofactor.

The protein resides in the cytoplasm. The catalysed reaction is 7-phospho-2-dehydro-3-deoxy-D-arabino-heptonate = 3-dehydroquinate + phosphate. It participates in metabolic intermediate biosynthesis; chorismate biosynthesis; chorismate from D-erythrose 4-phosphate and phosphoenolpyruvate: step 2/7. Its function is as follows. Catalyzes the conversion of 3-deoxy-D-arabino-heptulosonate 7-phosphate (DAHP) to dehydroquinate (DHQ). In Clostridium perfringens (strain 13 / Type A), this protein is 3-dehydroquinate synthase.